A 321-amino-acid chain; its full sequence is o-succinylbenzoate synthase (321 aa).

Residue Lys-134 is the Proton donor of the active site. Residues Asp-162, Glu-191, and Asp-214 each contribute to the Mg(2+) site. Catalysis depends on Lys-236, which acts as the Proton acceptor.

The protein belongs to the mandelate racemase/muconate lactonizing enzyme family. MenC type 1 subfamily. A divalent metal cation serves as cofactor.

The enzyme catalyses (1R,6R)-6-hydroxy-2-succinyl-cyclohexa-2,4-diene-1-carboxylate = 2-succinylbenzoate + H2O. The protein operates within quinol/quinone metabolism; 1,4-dihydroxy-2-naphthoate biosynthesis; 1,4-dihydroxy-2-naphthoate from chorismate: step 4/7. It participates in quinol/quinone metabolism; menaquinone biosynthesis. In terms of biological role, converts 2-succinyl-6-hydroxy-2,4-cyclohexadiene-1-carboxylate (SHCHC) to 2-succinylbenzoate (OSB). This chain is o-succinylbenzoate synthase, found in Enterobacter sp. (strain 638).